Here is a 57-residue protein sequence, read N- to C-terminus: Large ribosomal subunit protein bL33 (57 aa).

It belongs to the bacterial ribosomal protein bL33 family.

This is Large ribosomal subunit protein bL33 from Shewanella denitrificans (strain OS217 / ATCC BAA-1090 / DSM 15013).